The chain runs to 615 residues: DNA mismatch repair protein MutL (615 aa).

Residues 363–397 (FAEPAAREPVAPRYTPAPASGSRPAAPWPNAQPGY) form a disordered region. The segment covering 364 to 391 (AEPAAREPVAPRYTPAPASGSRPAAPWP) has biased composition (low complexity).

The protein belongs to the DNA mismatch repair MutL/HexB family.

Its function is as follows. This protein is involved in the repair of mismatches in DNA. It is required for dam-dependent methyl-directed DNA mismatch repair. May act as a 'molecular matchmaker', a protein that promotes the formation of a stable complex between two or more DNA-binding proteins in an ATP-dependent manner without itself being part of a final effector complex. The sequence is that of DNA mismatch repair protein MutL from Shigella boydii serotype 18 (strain CDC 3083-94 / BS512).